A 126-amino-acid chain; its full sequence is Integrin alpha-M (126 aa).

N-linked (GlcNAc...) asparagine glycosylation is found at Asn-25, Asn-78, and Asn-106.

Belongs to the integrin alpha chain family. Heterodimer of an alpha and a beta chain. ITGAM associates with ITGB2. Found in a complex with CD177 and ITGB2/CD18. Interacts with JAM3. Interacts with THBD. Interacts with TMEM268; this interaction inhibits ITGAM degradation via the endosome-lysosome pathway.

The protein localises to the cell membrane. Its subcellular location is the membrane raft. Its function is as follows. Integrin ITGAM/ITGB2 is implicated in various adhesive interactions of monocytes, macrophages and granulocytes as well as in mediating the uptake of complement-coated particles. It is identical with CR-3, the receptor for the iC3b fragment of the third complement component. It probably recognizes the R-G-D peptide in C3b. Integrin ITGAM/ITGB2 is also a receptor for fibrinogen, factor X and ICAM1. It recognizes P1 and P2 peptides of fibrinogen gamma chain. Regulates neutrophil migration. In association with beta subunit ITGB2/CD18, required for CD177-PRTN3-mediated activation of TNF primed neutrophils. May regulate phagocytosis-induced apoptosis in extravasated neutrophils. May play a role in mast cell development. Required with TYROBP/DAP12 in microglia to control production of microglial superoxide ions which promote the neuronal apoptosis that occurs during brain development. In Cavia porcellus (Guinea pig), this protein is Integrin alpha-M (ITGAM).